Consider the following 355-residue polypeptide: Protein RecA (355 aa).

G72 to T79 is an ATP binding site.

The protein belongs to the RecA family.

Its subcellular location is the cytoplasm. Can catalyze the hydrolysis of ATP in the presence of single-stranded DNA, the ATP-dependent uptake of single-stranded DNA by duplex DNA, and the ATP-dependent hybridization of homologous single-stranded DNAs. It interacts with LexA causing its activation and leading to its autocatalytic cleavage. This Wolbachia pipientis subsp. Culex pipiens (strain wPip) protein is Protein RecA.